The primary structure comprises 247 residues: Protein At-4/1 (247 aa).

Coiled coils occupy residues 39-126 (VESS…YKIR) and 182-247 (LLME…LSSS).

In terms of assembly, interacts with viral tomato spotted wilt virus (TSWV) movement protein NSM, which is involved in cell-to cell spread of viral genome and enlargement of the host plasmodesmata size exclusion limit (SEL). Expressed in leaves (at protein level).

Its subcellular location is the endoplasmic reticulum. It localises to the cell junction. The protein localises to the plasmodesma. Functionally, involved in intra- and inter-cellular trafficking through plasmodesmata (PD). The polypeptide is Protein At-4/1 (Arabidopsis thaliana (Mouse-ear cress)).